The following is a 134-amino-acid chain: MAKAPANNAAQRVRKKVRKNVADGIAHVHASFNNTIITITDRQGNALSWASSGGQGFKGSRKSTPFAAQVASEVAGRAAVEQGIKNLDVEIKGPGPGRESSVRALAALGIRINSIADVTPVPHNGCRPQKRRRI.

Belongs to the universal ribosomal protein uS11 family. Part of the 30S ribosomal subunit. Interacts with proteins S7 and S18. Binds to IF-3.

In terms of biological role, located on the platform of the 30S subunit, it bridges several disparate RNA helices of the 16S rRNA. Forms part of the Shine-Dalgarno cleft in the 70S ribosome. The chain is Small ribosomal subunit protein uS11 from Variovorax paradoxus (strain S110).